A 109-amino-acid polypeptide reads, in one-letter code: Cell division protein ZapA (109 aa).

The stretch at 21-100 (PDQRDALNQA…EQALLERGRI (80 aa)) forms a coiled coil.

The protein belongs to the ZapA family. Type 1 subfamily. In terms of assembly, homodimer. Interacts with FtsZ.

Its subcellular location is the cytoplasm. Its function is as follows. Activator of cell division through the inhibition of FtsZ GTPase activity, therefore promoting FtsZ assembly into bundles of protofilaments necessary for the formation of the division Z ring. It is recruited early at mid-cell but it is not essential for cell division. In Shigella dysenteriae serotype 1 (strain Sd197), this protein is Cell division protein ZapA.